The primary structure comprises 89 residues: Protein FAM25A (89 aa).

Belongs to the FAM25 family.

This chain is Protein FAM25A, found in Homo sapiens (Human).